Reading from the N-terminus, the 26-residue chain is Mu-theraphotoxin-Phlo2a (26 aa).

Disulfide bonds link Cys2–Cys16, Cys9–Cys21, and Cys15–Cys25.

This sequence belongs to the neurotoxin 30 (phrixotoxin) family. In terms of tissue distribution, expressed by the venom gland.

Its subcellular location is the secreted. Gating-modifier toxin that non-selectively inhibits voltage-gated sodium channel Nav by shifting the threshold for channel activation to more positive potentials. This toxin moderately inhibits human Nav1.2/SCN2A (IC(50)=404 nM), Nav1.5/SCN5A (IC(50)=218 nM) and Nav1.7/SCN9A (IC(50)=333 nM). Inhibition of Nav1.7 is voltage-dependent, with lower inhibition at more positive test pulses. This is Mu-theraphotoxin-Phlo2a from Phlogius sp. (Tarantula spider).